The chain runs to 168 residues: S-ribosylhomocysteine lyase (168 aa).

Residues His54, His58, and Cys128 each coordinate Fe cation.

It belongs to the LuxS family. As to quaternary structure, homodimer. Fe cation is required as a cofactor.

The enzyme catalyses S-(5-deoxy-D-ribos-5-yl)-L-homocysteine = (S)-4,5-dihydroxypentane-2,3-dione + L-homocysteine. Involved in the synthesis of autoinducer 2 (AI-2) which is secreted by bacteria and is used to communicate both the cell density and the metabolic potential of the environment. The regulation of gene expression in response to changes in cell density is called quorum sensing. Catalyzes the transformation of S-ribosylhomocysteine (RHC) to homocysteine (HC) and 4,5-dihydroxy-2,3-pentadione (DPD). The sequence is that of S-ribosylhomocysteine lyase from Neisseria meningitidis serogroup A / serotype 4A (strain DSM 15465 / Z2491).